The primary structure comprises 74 residues: uncharacterized protein (74 aa).

The chain crosses the membrane as a helical span at residues 20 to 40 (IYSYTLLTLLVITLICYLIHI).

Belongs to the asfivirus KP93L family.

It localises to the host membrane. This is an uncharacterized protein from African swine fever virus (isolate Tick/South Africa/Pretoriuskop Pr4/1996) (ASFV).